The following is a 781-amino-acid chain: Zinc finger protein klf1 (781 aa).

2 consecutive C2H2-type zinc fingers follow at residues 17 to 41 (YKCDFQGCTKSFTRKEHARRHFRSH) and 47 to 70 (FICPHCSSSFTRSDVLNRHVNQKH).

Its subcellular location is the nucleus. The protein resides in the cytoplasm. It localises to the cytoskeleton. It is found in the spindle. In terms of biological role, required for maintaining cell viability in nitrogen-deficient stationary phase (G0) cells. The protein is Zinc finger protein klf1 (klf1) of Schizosaccharomyces pombe (strain 972 / ATCC 24843) (Fission yeast).